We begin with the raw amino-acid sequence, 941 residues long: MTVDYKNTLNLPETSFPMRGDLAKREPDMLKNWYEKNLYQKIRKASKGKKSFILHDGPPYANGNIHIGHAVNKILKDIIIKSKTALGFDSPYIPGWDCHGLPIELKVEGLVGKPNEKISAAEFRQKCREYASEQVEGQKKDFIRLGVLGDWDNPYLTMNFDTEANIIRTLGKVIENGHLYKGSKPVHWCLDCGSSLAEAEVEYEDKVSPSIYVRFPVESADEIEAKFSAQGRGQGKLSAIIWTTTPWTMPSNRAIAVNADLEYNLVQLGDERVILAAELVESVAKAVGVEQVKILGSVKGADLELSRFHHPFYDFTVPVILGDHVTTDGGTGLVHTAPDHGLDDFIVGKQYDLPMAGLVSNDGKFISMTEFFAGKGVFEANPLVIEKLQEVGNLLKVEKIKHSYPHCWRHKTPIIFRATPQWFIGMETQGLRQQALGEIKQVRWIPDWGQARIEKMVENRPDWCISRQRTWGVPMTLFVHKETEELHPRTLDLLEEVAKRVERAGIQAWWDLDEKELLGADAETYRKVPDTLDVWFDSGSTYSSVVANRLEFNGQNIDMYLEGSDQHRGWFMSSLMLSTATDSKAPYKQVLTHGFTVDGQGRKMSKSIGNIVTPQEVMDKFGGDILRLWVASTDYTGEMTVSDEILKRAADSYRRIRNTARFLLANLNGFDPKRDLVKPEEMISLDRWAVACALDAQHEIKDAYDNYQFHTVVQRLMRFCSVEMGSFYLDIIKDRQYTTKASSLARRSCQTALWHIAEALVRWMAPILSFTADEIWQHLPQTESARAEFVFTEEFYQGLFGLGENEKLDDAYWQQLIKVRSEVNRVLEISRNNKEIGGGLEAEVTLYANDEYRALLEQLGNELRFVLITSKVDVKSLSEKPADLADSELEGITVSVTRSNAEKCPRCWHYSDKIGVNPEHPMLCPRCVENVVGNGEVRHFA.

Residues 59 to 69 carry the 'HIGH' region motif; it reads PYANGNIHIGH. Residue Glu-562 participates in L-isoleucyl-5'-AMP binding. A 'KMSKS' region motif is present at residues 603–607; that stretch reads KMSKS. Residue Lys-606 coordinates ATP. Residues Cys-904, Cys-907, Cys-924, and Cys-927 each contribute to the Zn(2+) site.

Belongs to the class-I aminoacyl-tRNA synthetase family. IleS type 1 subfamily. As to quaternary structure, monomer. Zn(2+) is required as a cofactor.

It localises to the cytoplasm. It catalyses the reaction tRNA(Ile) + L-isoleucine + ATP = L-isoleucyl-tRNA(Ile) + AMP + diphosphate. Functionally, catalyzes the attachment of isoleucine to tRNA(Ile). As IleRS can inadvertently accommodate and process structurally similar amino acids such as valine, to avoid such errors it has two additional distinct tRNA(Ile)-dependent editing activities. One activity is designated as 'pretransfer' editing and involves the hydrolysis of activated Val-AMP. The other activity is designated 'posttransfer' editing and involves deacylation of mischarged Val-tRNA(Ile). In Haemophilus influenzae (strain PittEE), this protein is Isoleucine--tRNA ligase.